A 295-amino-acid chain; its full sequence is Pyridoxal 5'-phosphate synthase subunit PdxS (295 aa).

D25 lines the D-ribose 5-phosphate pocket. The active-site Schiff-base intermediate with D-ribose 5-phosphate is K82. G154 contacts D-ribose 5-phosphate. A D-glyceraldehyde 3-phosphate-binding site is contributed by R166. D-ribose 5-phosphate is bound by residues G215 and 236–237; that span reads GS.

It belongs to the PdxS/SNZ family. In terms of assembly, in the presence of PdxT, forms a dodecamer of heterodimers.

It carries out the reaction aldehydo-D-ribose 5-phosphate + D-glyceraldehyde 3-phosphate + L-glutamine = pyridoxal 5'-phosphate + L-glutamate + phosphate + 3 H2O + H(+). It participates in cofactor biosynthesis; pyridoxal 5'-phosphate biosynthesis. In terms of biological role, catalyzes the formation of pyridoxal 5'-phosphate from ribose 5-phosphate (RBP), glyceraldehyde 3-phosphate (G3P) and ammonia. The ammonia is provided by the PdxT subunit. Can also use ribulose 5-phosphate and dihydroxyacetone phosphate as substrates, resulting from enzyme-catalyzed isomerization of RBP and G3P, respectively. The protein is Pyridoxal 5'-phosphate synthase subunit PdxS of Bacillus cereus (strain 03BB102).